The following is a 214-amino-acid chain: ATP phosphoribosyltransferase (214 aa).

The protein belongs to the ATP phosphoribosyltransferase family. Short subfamily. In terms of assembly, heteromultimer composed of HisG and HisZ subunits.

It localises to the cytoplasm. The enzyme catalyses 1-(5-phospho-beta-D-ribosyl)-ATP + diphosphate = 5-phospho-alpha-D-ribose 1-diphosphate + ATP. Its pathway is amino-acid biosynthesis; L-histidine biosynthesis; L-histidine from 5-phospho-alpha-D-ribose 1-diphosphate: step 1/9. Functionally, catalyzes the condensation of ATP and 5-phosphoribose 1-diphosphate to form N'-(5'-phosphoribosyl)-ATP (PR-ATP). Has a crucial role in the pathway because the rate of histidine biosynthesis seems to be controlled primarily by regulation of HisG enzymatic activity. The polypeptide is ATP phosphoribosyltransferase (hisG) (Aquifex aeolicus (strain VF5)).